Reading from the N-terminus, the 1343-residue chain is ABC multidrug transporter atrD (1343 aa).

Positions 1-10 (MSPLETNPLS) are enriched in polar residues. The disordered stretch occupies residues 1–67 (MSPLETNPLS…HRPKSSSSNN (67 aa)). A compositionally biased stretch (low complexity) spans 20–31 (ETSTTEEQASTP). N-linked (GlcNAc...) asparagine glycosylation occurs at asparagine 99. 4 helical membrane passes run 114 to 134 (ILIMVISTICAIAAGAALPLF), 163 to 183 (YFVYLGIGEFVTVYVSTVGFI), 235 to 255 (KVGLTLTALATFVTAFIIAYV), and 263 to 283 (ICSSTIVALVLTMGGGSQFII). An ABC transmembrane type-1 1 domain is found at 115 to 403 (LIMVISTICA…VSPNAQAFTN (289 aa)). Asparagine 309 is a glycosylation site (N-linked (GlcNAc...) asparagine). A run of 2 helical transmembrane segments spans residues 339 to 359 (IVMGFMIGAMFGLMYSNYGLG) and 366 to 386 (FLVDGAVDVGDILTVLMAILI). An ABC transporter 1 domain is found at 438 to 683 (IELRNVKHIY…GGAYRKLVEA (246 aa)). 473-480 (GPSGSGKS) serves as a coordination point for ATP. Residue asparagine 545 is glycosylated (N-linked (GlcNAc...) asparagine). 2 helical membrane-spanning segments follow: residues 773–793 (MLIGLVFSVLAGGGQPTQAVL) and 820–840 (LMFFVVGIIQFITQSTNGAAF). Residues 774 to 1063 (LIGLVFSVLA…VFSFAPDMGK (290 aa)) form the ABC transmembrane type-1 2 domain. Residue asparagine 872 is glycosylated (N-linked (GlcNAc...) asparagine). Helical transmembrane passes span 887–907 (HLSGVSGVTLGTILMTSTTLG), 920–942 (LALVCISVVPVLLACGFYRFYML), 1010–1030 (ALVFFCVALGFWYGGTLLGHH), and 1037–1057 (FFVCFSEILFGAQSAGTVFSF). N-linked (GlcNAc...) asparagine glycosylation is present at asparagine 1083. One can recognise an ABC transporter 2 domain in the interval 1098–1336 (IEFRNVHFRY…KGRYYELVNL (239 aa)). Residue 1133–1140 (GPSGCGKS) participates in ATP binding.

This sequence belongs to the ABC transporter superfamily. ABCB family. Multidrug resistance exporter (TC 3.A.1.201) subfamily.

The protein localises to the cell membrane. Fenamirol efflux transporter activity is inhibited by the cyclosporin derivative PSC 833, nigericin, reserpine and valinomycin. The effect of reserpine is transiant, while that of the cyclosporin derivative PSC 833, nigericin and valinomycin is proportional to the time of exposure. Cyclohexinmide has inhibitory effect only when applied prior to addition of the fungicide. Its function is as follows. Pleiotropic ABC efflux transporter involved in the protection of the cells against a wide range of toxic compounds. Confers resistance to the azole fenarimol via efflux transport. May also be involved in the secretion of penicillin. The protein is ABC multidrug transporter atrD of Emericella nidulans (strain FGSC A4 / ATCC 38163 / CBS 112.46 / NRRL 194 / M139) (Aspergillus nidulans).